Consider the following 337-residue polypeptide: Inositol 2-dehydrogenase (337 aa).

Belongs to the Gfo/Idh/MocA family. As to quaternary structure, homotetramer.

The enzyme catalyses myo-inositol + NAD(+) = scyllo-inosose + NADH + H(+). Its function is as follows. Involved in the oxidation of myo-inositol (MI) to 2-keto-myo-inositol (2KMI or 2-inosose). This Pseudarthrobacter chlorophenolicus (strain ATCC 700700 / DSM 12829 / CIP 107037 / JCM 12360 / KCTC 9906 / NCIMB 13794 / A6) (Arthrobacter chlorophenolicus) protein is Inositol 2-dehydrogenase.